Reading from the N-terminus, the 337-residue chain is D-alanine--D-alanine ligase (337 aa).

Residues 124–330 form the ATP-grasp domain; sequence KMWFSALGIP…FTEYLSLVIN (207 aa). 154-209 is a binding site for ATP; sequence ALAQWGSIFVKAASQGSSVGCYKVDDSAKVAGVLKDAFGYAPYVIVEKTIKARELE. 3 residues coordinate Mg(2+): D284, E297, and N299.

The protein belongs to the D-alanine--D-alanine ligase family. The cofactor is Mg(2+). Requires Mn(2+) as cofactor.

Its subcellular location is the cytoplasm. It carries out the reaction 2 D-alanine + ATP = D-alanyl-D-alanine + ADP + phosphate + H(+). The protein operates within cell wall biogenesis; peptidoglycan biosynthesis. In terms of biological role, cell wall formation. The chain is D-alanine--D-alanine ligase from Shewanella baltica (strain OS223).